A 324-amino-acid chain; its full sequence is MIRTDWTMAEAWAIHALPFADLMHRAQTLHRAHFDPNAIETASLLSIKTGGCPEDCGYCSQSAHHDTGVKATKLMGTEEVLAAARRAKASGAQRFCMGAAWRSPKDRDMDKLCDMVRGVAELGLETCMTLGMLSPEQVARLKAAGLDFYNHNIDTSPEYYAQIASTRTMENRLDTVEQVRKGGIKVCCGGILGMGEAEEDRIAMLVTLATLPAHPDSVPVNLWNEIEGVPVQARAQAVDPFALVRIVALARILMPASVVRLSAGRTGMSDELQALCFLAGANSIFVGDQLLTTGNPAAWKDQDLLSRLGMHIAPAQARPRVAAE.

The Radical SAM core domain occupies 37 to 256 (NAIETASLLS…VALARILMPA (220 aa)). Cysteine 52, cysteine 56, and cysteine 59 together coordinate [4Fe-4S] cluster. Residues cysteine 96, cysteine 127, cysteine 187, and arginine 260 each contribute to the [2Fe-2S] cluster site.

It belongs to the radical SAM superfamily. Biotin synthase family. As to quaternary structure, homodimer. Requires [4Fe-4S] cluster as cofactor. [2Fe-2S] cluster serves as cofactor.

The enzyme catalyses (4R,5S)-dethiobiotin + (sulfur carrier)-SH + 2 reduced [2Fe-2S]-[ferredoxin] + 2 S-adenosyl-L-methionine = (sulfur carrier)-H + biotin + 2 5'-deoxyadenosine + 2 L-methionine + 2 oxidized [2Fe-2S]-[ferredoxin]. Its pathway is cofactor biosynthesis; biotin biosynthesis; biotin from 7,8-diaminononanoate: step 2/2. In terms of biological role, catalyzes the conversion of dethiobiotin (DTB) to biotin by the insertion of a sulfur atom into dethiobiotin via a radical-based mechanism. The sequence is that of Biotin synthase 1 from Paracoccus denitrificans (strain Pd 1222).